We begin with the raw amino-acid sequence, 174 residues long: Bacterial proteasome activator (174 aa).

Residues Gln153–Leu174 are disordered. The span at Gly161–Leu174 shows a compositional bias: gly residues. Residues Gln172–Leu174 carry the HbYX motif motif.

Belongs to the Bpa family. Forms a homooligomeric, either hexameric or heptameric, ring-like structure which stacks co-axially with the proteasomal alpha-rings.

Functionally, interacts with the core proteasome alpha-subunit (PrcA) through its C-terminal hydrophobic-tyrosine-X motif (HbYX motif). Interaction of Bpa with the proteasome stimulates proteasomal peptidase and casein degradation activity, which suggests Bpa could play a role in the removal of non-native or damaged proteins by influencing the conformation of the proteasome complex upon interaction. The polypeptide is Bacterial proteasome activator (bpa) (Mycobacterium bovis (strain ATCC BAA-935 / AF2122/97)).